The primary structure comprises 577 residues: 2-hydroxyacyl-CoA lyase (577 aa).

Glutamate 59 is a binding site for thiamine diphosphate. The thiamine pyrophosphate binding stretch occupies residues 412–493; the sequence is TMDVGRAVLV…VIVFNNNGVY (82 aa). Residues aspartate 462 and asparagine 489 each contribute to the Mg(2+) site.

This sequence belongs to the TPP enzyme family. In terms of assembly, homotetramer. Mg(2+) serves as cofactor. The cofactor is thiamine diphosphate.

It catalyses the reaction an (R)-2-hydroxy-long-chain-fatty acyl-CoA = a long-chain fatty aldehyde + formyl-CoA. The enzyme catalyses a 2-hydroxy-3-methyl fatty acyl-CoA = a 2-methyl-branched fatty aldehyde + formyl-CoA. Functionally, catalyzes a carbon-carbon cleavage reaction; cleaves a 2-hydroxy-3-methylacyl-CoA into formyl-CoA and a 2-methyl-branched fatty aldehyde. The chain is 2-hydroxyacyl-CoA lyase from Oryza sativa subsp. japonica (Rice).